We begin with the raw amino-acid sequence, 890 residues long: Translation initiation factor IF-2 (890 aa).

Positions 45 to 304 (LIDHLNQKNS…LQQGFQKPAQ (260 aa)) are disordered. Positions 67-81 (STLNIPGTGGKSKSV) are enriched in polar residues. The segment covering 92–217 (VKRDPQEAER…RMAEENKWTD (126 aa)) has biased composition (basic and acidic residues). A compositionally biased stretch (basic residues) spans 252–266 (GRGRNAKAARPKKGN). A compositionally biased stretch (basic and acidic residues) spans 267–280 (KHAESKADREEARA). Residues 389–558 (PRAPVVTIMG…LLQAEVLELK (170 aa)) form the tr-type G domain. Residues 398 to 405 (GHVDHGKT) are G1. A GTP-binding site is contributed by 398–405 (GHVDHGKT). Residues 423–427 (GITQH) form a G2 region. The G3 stretch occupies residues 444-447 (DTPG). Residues 444-448 (DTPGH) and 498-501 (NKID) contribute to the GTP site. A G4 region spans residues 498–501 (NKID). Residues 534–536 (SAK) form a G5 region. N6-acetyllysine is present on Lys-808.

It belongs to the TRAFAC class translation factor GTPase superfamily. Classic translation factor GTPase family. IF-2 subfamily.

It is found in the cytoplasm. Functionally, one of the essential components for the initiation of protein synthesis. Protects formylmethionyl-tRNA from spontaneous hydrolysis and promotes its binding to the 30S ribosomal subunits. Also involved in the hydrolysis of GTP during the formation of the 70S ribosomal complex. In Escherichia coli (strain 55989 / EAEC), this protein is Translation initiation factor IF-2.